Here is an 811-residue protein sequence, read N- to C-terminus: G-type lectin S-receptor-like serine/threonine-protein kinase LECRK2 (811 aa).

Positions methionine 1–alanine 23 are cleaved as a signal peptide. Residues glutamine 24 to glycine 153 form the Bulb-type lectin domain. The Extracellular portion of the chain corresponds to glutamine 24–serine 464. N-linked (GlcNAc...) asparagine glycans are attached at residues asparagine 26, asparagine 39, asparagine 59, asparagine 219, asparagine 226, asparagine 237, and asparagine 242. Positions proline 292–arginine 344 constitute an EGF-like; atypical domain. Cystine bridges form between cysteine 296–cysteine 314, cysteine 308–cysteine 325, cysteine 327–cysteine 343, cysteine 389–cysteine 411, and cysteine 393–cysteine 399. Asparagine 321 carries N-linked (GlcNAc...) asparagine glycosylation. In terms of domain architecture, PAN spans cysteine 352–proline 436. The helical transmembrane segment at leucine 465–threonine 485 threads the bilayer. At tyrosine 486 to alanine 811 the chain is on the cytoplasmic side. In terms of domain architecture, Protein kinase spans glycine 521–valine 795. Residues leucine 527–valine 535 and lysine 551 each bind ATP. Aspartate 645 serves as the catalytic Proton acceptor.

This sequence belongs to the protein kinase superfamily. Ser/Thr protein kinase family.

It localises to the membrane. The enzyme catalyses L-seryl-[protein] + ATP = O-phospho-L-seryl-[protein] + ADP + H(+). The catalysed reaction is L-threonyl-[protein] + ATP = O-phospho-L-threonyl-[protein] + ADP + H(+). Functionally, involved in resistance against the herbivorous insect brown planthopper (N.lugens, BPH). Member of the BPH3 (BPH resistance locus 3) cluster which contains LECRK1, LECRK2 and LECRK3. The protein is G-type lectin S-receptor-like serine/threonine-protein kinase LECRK2 of Oryza sativa subsp. indica (Rice).